The sequence spans 501 residues: Splicing factor 3A subunit 3 (501 aa).

An N-acetylmethionine modification is found at Met1. Residues Ser54 and Ser121 each carry the phosphoserine modification. A Nuclear localization signal motif is present at residues 175–179 (KERKN). 2 positions are modified to phosphoserine: Ser295 and Ser299. Residues 343–354 (ENVQRKQARTGE) show a composition bias toward basic and acidic residues. The disordered stretch occupies residues 343–374 (ENVQRKQARTGEEREEEEEEQISESESEDEEN). The span at 355–374 (EREEEEEEQISESESEDEEN) shows a compositional bias: acidic residues. Phosphoserine is present on residues Ser365, Ser367, and Ser369. Residues 406–437 (YNCEICGNYTYRGPKAFQRHFAEWRHAHGMRC) form a Matrin-type zinc finger. Residue Thr475 is modified to Phosphothreonine.

It belongs to the SF3A3 family. As to quaternary structure, component of the 17S U2 SnRNP complex, a ribonucleoprotein complex that contains small nuclear RNA (snRNA) U2 and a number of specific proteins. Part of the SF3A subcomplex of the 17S U2 SnRNP complex which is composed of three subunits; SF3A3/SAP61, SF3A2/SAP62 and SF3A1/SAP114. SF3A associates with the splicing factor SF3B and a 12S RNA unit to form the mature 17S U2 small nuclear ribonucleoprotein complex (17S U2 snRNP). Identified in the spliceosome 'E' complex, a precursor of the spliceosome 'A' complex. Identified in the spliceosome 'A' and 'B' complexes. Identified in the spliceosome 'C' complex. As to expression, ubiquitous.

Its subcellular location is the nucleus speckle. The protein resides in the nucleus. In terms of biological role, component of the 17S U2 SnRNP complex of the spliceosome, a large ribonucleoprotein complex that removes introns from transcribed pre-mRNAs. The 17S U2 SnRNP complex (1) directly participates in early spliceosome assembly and (2) mediates recognition of the intron branch site during pre-mRNA splicing by promoting the selection of the pre-mRNA branch-site adenosine, the nucleophile for the first step of splicing. Within the 17S U2 SnRNP complex, SF3A3 is part of the SF3A subcomplex that contributes to the assembly of the 17S U2 snRNP, and the subsequent assembly of the pre-spliceosome 'E' complex and the pre-catalytic spliceosome 'A' complex. Involved in pre-mRNA splicing as a component of pre-catalytic spliceosome 'B' complexes. The sequence is that of Splicing factor 3A subunit 3 (SF3A3) from Homo sapiens (Human).